The following is a 235-amino-acid chain: 2-C-methyl-D-erythritol 4-phosphate cytidylyltransferase (235 aa).

This sequence belongs to the IspD/TarI cytidylyltransferase family. IspD subfamily. As to quaternary structure, homodimer.

It carries out the reaction 2-C-methyl-D-erythritol 4-phosphate + CTP + H(+) = 4-CDP-2-C-methyl-D-erythritol + diphosphate. Its pathway is isoprenoid biosynthesis; isopentenyl diphosphate biosynthesis via DXP pathway; isopentenyl diphosphate from 1-deoxy-D-xylulose 5-phosphate: step 2/6. Catalyzes the formation of 4-diphosphocytidyl-2-C-methyl-D-erythritol from CTP and 2-C-methyl-D-erythritol 4-phosphate (MEP). The polypeptide is 2-C-methyl-D-erythritol 4-phosphate cytidylyltransferase (Blochmanniella pennsylvanica (strain BPEN)).